The primary structure comprises 98 residues: MTPTHFSLNAAFMLGLAGLTFHRVHLLSALLCLEGMMLSLFISMALWTLKTESMSLSTAPMLLLAFSACEASAGLALLVATARTHGSDHMKNLNLLQC.

3 helical membrane passes run 1–21 (MTPT…GLTF), 26–46 (LLSA…SMAL), and 59–79 (APML…ALLV).

It belongs to the complex I subunit 4L family. As to quaternary structure, core subunit of respiratory chain NADH dehydrogenase (Complex I) which is composed of 45 different subunits.

It localises to the mitochondrion inner membrane. It carries out the reaction a ubiquinone + NADH + 5 H(+)(in) = a ubiquinol + NAD(+) + 4 H(+)(out). Core subunit of the mitochondrial membrane respiratory chain NADH dehydrogenase (Complex I) which catalyzes electron transfer from NADH through the respiratory chain, using ubiquinone as an electron acceptor. Part of the enzyme membrane arm which is embedded in the lipid bilayer and involved in proton translocation. The polypeptide is NADH-ubiquinone oxidoreductase chain 4L (mt-nd4l) (Danio rerio (Zebrafish)).